A 602-amino-acid polypeptide reads, in one-letter code: DNA mismatch repair protein MutL (602 aa).

The disordered stretch occupies residues 337 to 367 (KRPFPGSSTNYSGIQQDTKKQESDNPEKARG). Residues 342–352 (GSSTNYSGIQQ) are compositionally biased toward polar residues. Over residues 353-367 (DTKKQESDNPEKARG) the composition is skewed to basic and acidic residues.

This sequence belongs to the DNA mismatch repair MutL/HexB family.

Its function is as follows. This protein is involved in the repair of mismatches in DNA. It is required for dam-dependent methyl-directed DNA mismatch repair. May act as a 'molecular matchmaker', a protein that promotes the formation of a stable complex between two or more DNA-binding proteins in an ATP-dependent manner without itself being part of a final effector complex. This is DNA mismatch repair protein MutL from Kosmotoga olearia (strain ATCC BAA-1733 / DSM 21960 / TBF 19.5.1).